Reading from the N-terminus, the 396-residue chain is NADH-quinone oxidoreductase subunit D 1 (396 aa).

The protein belongs to the complex I 49 kDa subunit family. As to quaternary structure, NDH-1 is composed of 14 different subunits. Subunits NuoB, C, D, E, F, and G constitute the peripheral sector of the complex.

It localises to the cell inner membrane. It carries out the reaction a quinone + NADH + 5 H(+)(in) = a quinol + NAD(+) + 4 H(+)(out). NDH-1 shuttles electrons from NADH, via FMN and iron-sulfur (Fe-S) centers, to quinones in the respiratory chain. The immediate electron acceptor for the enzyme in this species is believed to be ubiquinone. Couples the redox reaction to proton translocation (for every two electrons transferred, four hydrogen ions are translocated across the cytoplasmic membrane), and thus conserves the redox energy in a proton gradient. This Rhizobium etli (strain ATCC 51251 / DSM 11541 / JCM 21823 / NBRC 15573 / CFN 42) protein is NADH-quinone oxidoreductase subunit D 1.